The primary structure comprises 289 residues: MYG1 protein TC_0665 (289 aa).

The protein belongs to the MYG1 family.

The sequence is that of MYG1 protein TC_0665 from Chlamydia muridarum (strain MoPn / Nigg).